The sequence spans 587 residues: Heavy metal-associated isoprenylated plant protein 33 (587 aa).

The 64-residue stretch at 9 to 72 folds into the HMA domain; it reads IQTCVLKVNI…KLLKSGKHAE (64 aa). A metal cation-binding residues include cysteine 20 and cysteine 23. Disordered regions lie at residues 98 to 146, 176 to 261, 287 to 449, 462 to 504, and 532 to 587; these read QIDH…MVIP, LKLP…KPMM, AHKN…PMSN, PGGG…QQQQ, and YARP…CNIM. 2 stretches are compositionally biased toward gly residues: residues 104-113 and 121-140; these read KGGGGGGGGP and KIGG…GGGP. Residues 194 to 208 show a composition bias toward low complexity; that stretch reads PMNKNPQMPNNPNQK. Residues 215–248 show a composition bias toward acidic residues; it reads PDDDDEEDFSDEFDDEFDEDDDEFDDDLEDDEFD. Composition is skewed to gly residues over residues 290–300, 312–419, and 428–445; these read NGGGPGPAGGK, MGGG…GGGP, and GAMG…GGPG. The segment covering 471–483 has biased composition (low complexity); sequence SAEAPPGYFQGQV. Composition is skewed to pro residues over residues 534-547 and 554-565; these read RPPP…PQPQ and YPYPYPYPPQYP. A compositionally biased stretch (polar residues) spans 578 to 587; the sequence is DENTSSCNIM. Cysteine 584 carries the cysteine methyl ester modification. Cysteine 584 carries the S-farnesyl cysteine lipid modification. Residues 585–587 constitute a propeptide, removed in mature form; it reads NIM.

Belongs to the HIPP family.

Heavy-metal-binding protein. In Arabidopsis thaliana (Mouse-ear cress), this protein is Heavy metal-associated isoprenylated plant protein 33.